A 214-amino-acid chain; its full sequence is Octanoyltransferase (214 aa).

A BPL/LPL catalytic domain is found at 35-211 (KSNIDFIWLG…IIQEEFYFNF (177 aa)). Substrate-binding positions include 75-82 (RGGEVTCH), 142-144 (SIG), and 155-157 (GFS). Residue cysteine 173 is the Acyl-thioester intermediate of the active site.

Belongs to the LipB family.

It is found in the cytoplasm. The catalysed reaction is octanoyl-[ACP] + L-lysyl-[protein] = N(6)-octanoyl-L-lysyl-[protein] + holo-[ACP] + H(+). It functions in the pathway protein modification; protein lipoylation via endogenous pathway; protein N(6)-(lipoyl)lysine from octanoyl-[acyl-carrier-protein]: step 1/2. Catalyzes the transfer of endogenously produced octanoic acid from octanoyl-acyl-carrier-protein onto the lipoyl domains of lipoate-dependent enzymes. Lipoyl-ACP can also act as a substrate although octanoyl-ACP is likely to be the physiological substrate. The protein is Octanoyltransferase of Prochlorococcus marinus (strain MIT 9515).